A 389-amino-acid chain; its full sequence is Methylthioribose kinase (389 aa).

Residues Asn-37, Lys-52, and 106–108 (EDL) contribute to the ATP site. A substrate-binding site is contributed by Asp-224. 241 to 243 (DPE) lines the ATP pocket. Arg-331 contacts substrate.

It belongs to the methylthioribose kinase family. Homodimer.

The catalysed reaction is 5-(methylsulfanyl)-D-ribose + ATP = 5-(methylsulfanyl)-alpha-D-ribose 1-phosphate + ADP + H(+). It participates in amino-acid biosynthesis; L-methionine biosynthesis via salvage pathway; S-methyl-5-thio-alpha-D-ribose 1-phosphate from S-methyl-5'-thioadenosine (hydrolase route): step 2/2. Functionally, catalyzes the phosphorylation of methylthioribose into methylthioribose-1-phosphate. The protein is Methylthioribose kinase of Exiguobacterium sibiricum (strain DSM 17290 / CCUG 55495 / CIP 109462 / JCM 13490 / 255-15).